Here is a 702-residue protein sequence, read N- to C-terminus: Polyribonucleotide nucleotidyltransferase (702 aa).

Mg(2+)-binding residues include Asp487 and Asp493. The KH domain maps to 554–613 (PRLLTIKIHPDKIREVIGKGGSTIQAITKETGTQIDIQDDGTIVIASVNAIAAQAAKARI). The S1 motif domain occupies 623-691 (GRIYEGKVAK…KQGRIRLSMK (69 aa)).

It belongs to the polyribonucleotide nucleotidyltransferase family. As to quaternary structure, component of the RNA degradosome, which is a multiprotein complex involved in RNA processing and mRNA degradation. It depends on Mg(2+) as a cofactor.

It localises to the cytoplasm. The catalysed reaction is RNA(n+1) + phosphate = RNA(n) + a ribonucleoside 5'-diphosphate. In terms of biological role, involved in mRNA degradation. Catalyzes the phosphorolysis of single-stranded polyribonucleotides processively in the 3'- to 5'-direction. This chain is Polyribonucleotide nucleotidyltransferase, found in Stenotrophomonas maltophilia (strain R551-3).